Reading from the N-terminus, the 1356-residue chain is Tenascin-R (1356 aa).

The signal sequence occupies residues methionine 1–cysteine 31. An N-linked (GlcNAc...) asparagine glycan is attached at asparagine 55. The stretch at cysteine 127–threonine 157 forms a coiled coil. The O-linked (Xyl...) (chondroitin sulfate) serine glycan is linked to serine 176. N-linked (GlcNAc...) asparagine glycosylation is found at asparagine 180 and asparagine 198. EGF-like domains follow at residues cysteine 188 to cysteine 199, cysteine 204 to cysteine 230, and cysteine 235 to cysteine 261. Serine 271 carries an O-linked (Xyl...) (chondroitin sulfate) serine glycan. Asparagine 278 carries an N-linked (GlcNAc...) asparagine glycan. 2 consecutive EGF-like domains span residues cysteine 281–cysteine 292 and serine 293–serine 324. Intrachain disulfides connect cysteine 297–cysteine 307 and cysteine 314–cysteine 323. The O-linked (Xyl...) (chondroitin sulfate) serine glycan is linked to serine 302. Fibronectin type-III domains are found at residues proline 328 to glycine 419, leucine 420 to aspartate 504, glycine 505 to proline 596, lysine 597 to aspartate 686, serine 687 to isoleucine 776, serine 777 to aspartate 864, proline 865 to serine 953, proline 954 to aspartate 1040, and proline 1041 to valine 1129. N-linked (GlcNAc...) asparagine glycans are attached at residues asparagine 391, asparagine 469, and asparagine 580. Serine 723 carries the post-translational modification Phosphoserine. Asparagine 790, asparagine 868, asparagine 873, asparagine 1034, asparagine 1044, and asparagine 1259 each carry an N-linked (GlcNAc...) asparagine glycan. The Fibrinogen C-terminal domain maps to glycine 1127–isoleucine 1342.

It belongs to the tenascin family. In terms of assembly, forms oligomers. Interacts with TNC and FN1. Interacts with BCAN and ACAN in a calcium -dependent manner. Interacts with CNTN1, SCN2B, PTPRZ1, and CSPG3. Contains N-linked oligosaccharides, O-linked sialylated structures. Contains O-linked chondroitin sulfate glycosaminoglycans. Contains N-linked oligosaccharides with a sulfated carbohydrate structure type GalNAc-4-SO4 or HNK-1 (SO4-3-GlcUABeta1,3GalBeta1,4GlcNAc). The levels of HNK-1 rise and fall in parallel to those of TNR during postnatal development of the cerebellum. In contrast, levels of GalNAc-4-SO4 are regulated independently from those of TNR, rising late in cerebellar development and continuing into adulthood. Early in postnatal development, GalNAc-4-SO4 is found predominantly on isoform 1, whereas in the adult it is predominantly on isoform 2. Brain-specific. Expressed in oligodendrocytes and small subsets of neurons (mainly interneurons and motoneurons) of the cerebellum, hippocampus and olfactory bulb. Expressed in dorsal root ganglia.

It localises to the secreted. Its subcellular location is the extracellular space. It is found in the extracellular matrix. Functionally, neural extracellular matrix (ECM) protein involved in interactions with different cells and matrix components. Theses interactions can influence cellular behavior by either evoking a stable adhesion and differentiation, or repulsion and inhibition of neurite growth. Binding to cell surface gangliosides inhibits RGD-dependent integrin-mediated cell adhesion and results in an inhibition of PTK2/FAK1 (FAK) phosphorylation and cell detachment. Binding to membrane surface sulfatides results in a oligodendrocyte adhesion and differentiation. Interaction with CNTN1 induces a repulsion of neurons and an inhibition of neurite outgrowth. Interacts with SCN2B may play a crucial role in clustering and regulation of activity of sodium channels at nodes of Ranvier. TNR-linked chondroitin sulfate glycosaminoglycans are involved in the interaction with FN1 and mediates inhibition of cell adhesion and neurite outgrowth. The highly regulated addition of sulfated carbohydrate structure may modulate the adhesive properties of TNR over the course of development and during synapse maintenance. The sequence is that of Tenascin-R (Tnr) from Rattus norvegicus (Rat).